A 227-amino-acid polypeptide reads, in one-letter code: N-acetyltransferase family 8 member 7 (227 aa).

The next 2 helical transmembrane spans lie at 36–56 (MLLL…LFLA) and 58–78 (GSWL…WFLA). The N-acetyltransferase domain occupies 61 to 220 (LLVLLSILTL…PMINLKYSLT (160 aa)).

This sequence belongs to the camello family.

It is found in the membrane. The enzyme catalyses L-lysyl-[protein] + acetyl-CoA = N(6)-acetyl-L-lysyl-[protein] + CoA + H(+). Functionally, has histone acetyltransferase activity in vitro, with specificity for histone H4. In Mus musculus (Mouse), this protein is N-acetyltransferase family 8 member 7.